Reading from the N-terminus, the 110-residue chain is Large ribosomal subunit protein uL22 (110 aa).

Belongs to the universal ribosomal protein uL22 family. Part of the 50S ribosomal subunit.

Functionally, this protein binds specifically to 23S rRNA; its binding is stimulated by other ribosomal proteins, e.g. L4, L17, and L20. It is important during the early stages of 50S assembly. It makes multiple contacts with different domains of the 23S rRNA in the assembled 50S subunit and ribosome. The globular domain of the protein is located near the polypeptide exit tunnel on the outside of the subunit, while an extended beta-hairpin is found that lines the wall of the exit tunnel in the center of the 70S ribosome. In Shewanella amazonensis (strain ATCC BAA-1098 / SB2B), this protein is Large ribosomal subunit protein uL22.